The sequence spans 428 residues: Putative zinc metalloprotease SA1105 (428 aa).

His21 contacts Zn(2+). The active site involves Glu22. Residue His25 participates in Zn(2+) binding. 4 consecutive transmembrane segments (helical) span residues 172–194 (FLTL…IGLA), 309–331 (GSTL…GFSF), 352–374 (IISL…LIPI), and 401–420 (TTII…LVTW). Positions 186–269 (ALVLFIGLAY…TKSVELTPKK (84 aa)) constitute a PDZ domain.

Belongs to the peptidase M50B family. The cofactor is Zn(2+).

Its subcellular location is the cell membrane. The sequence is that of Putative zinc metalloprotease SA1105 from Staphylococcus aureus (strain N315).